Here is a 124-residue protein sequence, read N- to C-terminus: Small ribosomal subunit protein uS12c (124 aa).

The protein belongs to the universal ribosomal protein uS12 family. In terms of assembly, part of the 30S ribosomal subunit.

It localises to the plastid. Functionally, with S4 and S5 plays an important role in translational accuracy. Located at the interface of the 30S and 50S subunits. This chain is Small ribosomal subunit protein uS12c (rps12), found in Helicosporidium sp. subsp. Simulium jonesii (Green alga).